Reading from the N-terminus, the 499-residue chain is Lysine--tRNA ligase (499 aa).

Glu409 and Glu416 together coordinate Mg(2+).

This sequence belongs to the class-II aminoacyl-tRNA synthetase family. In terms of assembly, homodimer. Mg(2+) serves as cofactor.

It localises to the cytoplasm. It catalyses the reaction tRNA(Lys) + L-lysine + ATP = L-lysyl-tRNA(Lys) + AMP + diphosphate. This Pseudomonas fluorescens (strain Pf0-1) protein is Lysine--tRNA ligase.